A 930-amino-acid polypeptide reads, in one-letter code: Short transient receptor potential channel 6 (930 aa).

A disordered region spans residues 1-27 (MSQSPRFVTRRGGSLKAAPGAGTRRNE). The Cytoplasmic portion of the chain corresponds to 1–437 (MSQSPRFVTR…CSKMGKILRG (437 aa)). 4 ANK repeats span residues 96–125 (IEEE…SLNV), 131–160 (MGQN…LSRV), 162–188 (DALL…FAEG), and 217–246 (HDVT…RIER). The chain crosses the membrane as a helical span at residues 438–458 (PFMKFVAHAASFTIFLGLLVM). The Extracellular segment spans residues 459–486 (NAADRFEGTKLLPNETSTDNARQLFRMK). A helical transmembrane segment spans residues 487–507 (TSCFSWMEMLIISWVIGMIWA). Topologically, residues 508 to 520 (ECKEIWTQGPKEY) are cytoplasmic. A helical transmembrane segment spans residues 521 to 541 (LFELWNMLDFGMLAIFAASFI). At 542 to 591 (ARFMAFWHASKAQSIIDANDTLKDLTKVTLGDNVKYYNLARIKWDPTDPQ) the chain is on the extracellular side. An N-linked (GlcNAc...) asparagine glycan is attached at asparagine 560. The chain crosses the membrane as a helical span at residues 592-612 (IISEGLYAIAVVLSFSRIAYI). The Cytoplasmic portion of the chain corresponds to 613 to 635 (LPANESFGPLQISLGRTVKDIFK). Residues 636-656 (FMVIFIMVFVAFMIGMFNLYS) traverse the membrane as a helical segment. The Extracellular portion of the chain corresponds to 657 to 705 (YYIGAKQNEAFTTVEESFKTLFWAIFGLSEVKSVVINYNHKFIENIGYV). A helical membrane pass occupies residues 706–726 (LYGVYNVTMVIVLLNMLIAMI). The Cytoplasmic segment spans residues 727–930 (NSSFQEIEDD…LEPKLEESRR (204 aa)). The residue at position 814 (serine 814) is a Phosphoserine.

It belongs to the transient receptor (TC 1.A.4) family. STrpC subfamily. TRPC6 sub-subfamily. As to quaternary structure, homodimer; forms channel complex. Interacts with MX1 and RNF24. Phosphorylated by FYN, leading to an increase of TRPC6 channel activity. Post-translationally, N-glycosylated. In terms of tissue distribution, lung and brain.

The protein resides in the cell membrane. The enzyme catalyses Ca(2+)(in) = Ca(2+)(out). Forms a receptor-activated non-selective calcium permeant cation channel. Probably is operated by a phosphatidylinositol second messenger system activated by receptor tyrosine kinases or G-protein coupled receptors. Activated by diacylglycerol (DAG) in a membrane-delimited fashion, independently of protein kinase C. Seems not to be activated by intracellular calcium store depletion. In Mus musculus (Mouse), this protein is Short transient receptor potential channel 6.